The following is a 300-amino-acid chain: Acetylglutamate kinase (300 aa).

Substrate contacts are provided by residues 73–74 (GG), Arg-95, and Asn-197.

This sequence belongs to the acetylglutamate kinase family. ArgB subfamily.

It is found in the cytoplasm. The enzyme catalyses N-acetyl-L-glutamate + ATP = N-acetyl-L-glutamyl 5-phosphate + ADP. Its pathway is amino-acid biosynthesis; L-arginine biosynthesis; N(2)-acetyl-L-ornithine from L-glutamate: step 2/4. Its function is as follows. Catalyzes the ATP-dependent phosphorylation of N-acetyl-L-glutamate. The sequence is that of Acetylglutamate kinase from Bordetella avium (strain 197N).